We begin with the raw amino-acid sequence, 469 residues long: Serine hydroxymethyltransferase, cytosolic (469 aa).

K248 carries the N6-(pyridoxal phosphate)lysine modification.

It belongs to the SHMT family. As to quaternary structure, homotetramer. The cofactor is pyridoxal 5'-phosphate.

It localises to the cytoplasm. It catalyses the reaction (6R)-5,10-methylene-5,6,7,8-tetrahydrofolate + glycine + H2O = (6S)-5,6,7,8-tetrahydrofolate + L-serine. It functions in the pathway one-carbon metabolism; tetrahydrofolate interconversion. In terms of biological role, interconversion of serine and glycine. This Candida glabrata (strain ATCC 2001 / BCRC 20586 / JCM 3761 / NBRC 0622 / NRRL Y-65 / CBS 138) (Yeast) protein is Serine hydroxymethyltransferase, cytosolic (SHM2).